The chain runs to 91 residues: Probable translocation protein y4yM (91 aa).

2 consecutive transmembrane segments (helical) span residues 15–35 (VVFM…GLTI) and 55–75 (LLVV…PLIE).

The protein belongs to the FliQ/MopD/SpaQ family.

Its subcellular location is the cell membrane. Could be involved in the secretion of an unknown factor. The sequence is that of Probable translocation protein y4yM from Sinorhizobium fredii (strain NBRC 101917 / NGR234).